We begin with the raw amino-acid sequence, 378 residues long: Putative aminoglycoside phosphotransferase (378 aa).

ATP is bound by residues Arg79 and 134-136; that span reads DYV. The active-site Proton acceptor is the Asp249. Residues Asn254, Asp267, and Glu269 each contribute to the Mg(2+) site.

The protein belongs to the aminoglycoside phosphotransferase family.

Might catalyze the phosphorylation of aminoglycosides and confer aminoglycoside antibiotics resistance. The sequence is that of Putative aminoglycoside phosphotransferase from Mycobacterium tuberculosis (strain CDC 1551 / Oshkosh).